A 743-amino-acid chain; its full sequence is Putative pre-mRNA-splicing factor ATP-dependent RNA helicase DHX32 (743 aa).

Met-1 is subject to N-acetylmethionine. The disordered stretch occupies residues 1–28 (MEEEGLECPNSSSEKRYFPESLDSSDGD). The 167-residue stretch at 72–238 (MENLLQNQIV…YGNVPVIEVK (167 aa)) folds into the Helicase ATP-binding domain. 85 to 92 (GDAKCGKS) provides a ligand contact to ATP. The DEAH box signature appears at 185–188 (DDIH).

Belongs to the DEAD box helicase family. DEAH subfamily. As to expression, expressed in lymphoid tissues (at protein level). Expressed in brain, heart, skeletal muscle, colon, thymus, spleen, kidney, liver, small intestine, placenta, lung, lymphoid tissues and blood leukocytes.

Its subcellular location is the nucleus. It localises to the mitochondrion. The catalysed reaction is ATP + H2O = ADP + phosphate + H(+). The protein is Putative pre-mRNA-splicing factor ATP-dependent RNA helicase DHX32 (DHX32) of Homo sapiens (Human).